We begin with the raw amino-acid sequence, 210 residues long: Dephospho-CoA kinase (210 aa).

The 193-residue stretch at Arg-18–Leu-210 folds into the DPCK domain. An ATP-binding site is contributed by Ala-26 to Ser-31.

The protein belongs to the CoaE family.

It localises to the cytoplasm. It catalyses the reaction 3'-dephospho-CoA + ATP = ADP + CoA + H(+). The protein operates within cofactor biosynthesis; coenzyme A biosynthesis; CoA from (R)-pantothenate: step 5/5. Catalyzes the phosphorylation of the 3'-hydroxyl group of dephosphocoenzyme A to form coenzyme A. The sequence is that of Dephospho-CoA kinase from Prochlorococcus marinus (strain SARG / CCMP1375 / SS120).